A 414-amino-acid polypeptide reads, in one-letter code: Serine/threonine transporter SstT (414 aa).

Helical transmembrane passes span 22–42 (GLVL…TIGF), 54–74 (IFVK…VMAA), 89–109 (IIVL…IAGF), 148–168 (AIFK…GLAL), 189–209 (IVHV…AETL), 223–243 (LLAV…PILV), 305–325 (MAGA…TLGL), and 337–357 (IVAA…LLLI).

It belongs to the dicarboxylate/amino acid:cation symporter (DAACS) (TC 2.A.23) family.

It localises to the cell inner membrane. It catalyses the reaction L-serine(in) + Na(+)(in) = L-serine(out) + Na(+)(out). The enzyme catalyses L-threonine(in) + Na(+)(in) = L-threonine(out) + Na(+)(out). Involved in the import of serine and threonine into the cell, with the concomitant import of sodium (symport system). The sequence is that of Serine/threonine transporter SstT from Haemophilus influenzae (strain PittEE).